Reading from the N-terminus, the 85-residue chain is Selenoprotein W (85 aa).

A cross-link (cysteinyl-selenocysteine (Cys-Sec); redox-active) is located at residues 10 to 13 (CGAU). Sec-13 is a non-standard amino acid (selenocysteine).

Belongs to the SelWTH family. Selenoprotein W subfamily. Expressed ubiquitously with predominant expression in the pituitary, spinal cord, sciatic nerve, cerebral cortex, cerebral nuclei, thalamus, cerebellum, muscle, cartilage, trachea, gizzard and artery. Weakly expressed in pancreas, testis, ovary, kidney and veins.

The protein localises to the cytoplasm. Plays a role as a glutathione (GSH)-dependent antioxidant. May be involved in a redox-related process. May play a role in the myopathies of selenium deficiency. The polypeptide is Selenoprotein W (Gallus gallus (Chicken)).